The sequence spans 1187 residues: MDVDAEEKRHRTRSKGVRVPVEPAIQELFSCPTPGCDGSGHVSGKYARHRSVYGCPLAKKRKTQDKQPQEPAPKRKPFAVKADSSSVDECYESDGTEDMDDKEEDDDEEFSEDNDEQGDDDDEDEVDREDEEEIEEEDDEDDEDDDDGDDVEEEEDDDDEEEEEEEEEEENEDHQMSCTRIMQDPEKDDNNNDEYDNYDELVAKSLLNLGKIAEDAAYRARTESEMNSNTSNSLEDDSDKNENLGRKSELSLDLDSDVVRETVDSLKLLAQGHGVVLSENISDRSYAEGMSQQDSRNMNYVMLGKPMNNGLMEKMVEESDEEVCLSSLECLRNQCFDLARKLSETNPQDRSQPPNMSVRQHVRQEDDFPGRTPDRSYSDMMNLMRLEEQLSPRSRTFSSCAKEDGCHERDDDTTSVNSDRSEEVFDMTKGNLTLLEKAIALETERAKAMREKMAMDAGRRDNLRSYEDQSPRQLAGEDRKSKSSDSHVKKPYYDPSRTEKRESKCPTPGCDGTGHVTGLYPHHRSLSGCPHKDRVPPEILAMHENVLKCPTPGCTGRGHVNSNRNSHRSLSGCPIAAAEKLAKAQEKHQSCDVSKSNQASDRVLRPMCFVKQLEIPQYGYRNNVPTTTPRSNLAKELEKYSKTSFEYNSYDNHTYGKRAIAPKVQTRDISPKGYDDAKRYCKNASPSSSTTSSYAPSSSSNLSCGGGSSASSTCSKSSFDYTHDMEAAHMAATAILNLSTRCREMPQNLSTKPQDLCTARNPDMEVDENGTLDLSMNKQRPRDSCCPVLTPLEPMSPQQQAVMSSRCFQLSEGDCWDLPVDYTKMKPRRVDEEDPKEITPEDLDPFQEALEERRYPGEVTIPSPKPKYPQCKESKKDLITLSGCPLADKSIRSMLATSSQELKCPTPGCDGSGHITGNYASHRSLSGCPRAKKSGIRIAQSKEDKEDQEPIRCPVPGCDGQGHITGKYASHRSASGCPLAAKRQKDGYLNGSQFSWKSVKTEGMSCPTPGCDGSGHVSGSFLTHRSLSGCPRATSAMKKAKLSGEQMLTIKQRASNGIENDEEIKQLDEEIKELNESNSQMEADMIKLRTQVTITTMESNLKTIEEENKVIEQQNESLLHELANLSQSLIHSLANIQLPHMDPINEQNFDAYVTTLTEMYTNQDRYQSPENKALLENIKQAVRGIQV.

Positions 1–20 (MDVDAEEKRHRTRSKGVRVP) are disordered. The segment at 22 to 65 (EPAIQELFSCPTPGCDGSGHVSGKYARHRSVYGCPLAKKRKTQD) adopts a CCHHC-type 1 zinc-finger fold. Cys31, Cys36, His49, and Cys55 together coordinate Zn(2+). Disordered stretches follow at residues 56-178 (PLAK…QMSC) and 221-248 (RTESEMNSNTSNSLEDDSDKNENLGRKS). The span at 89-172 (ECYESDGTED…EEEEEEEENE (84 aa)) shows a compositional bias: acidic residues. Position 251 is a phosphoserine (Ser251). 2 disordered regions span residues 343–422 (SETN…DRSE) and 450–509 (REKM…PTPG). The span at 344-358 (ETNPQDRSQPPNMSV) shows a compositional bias: polar residues. 3 stretches are compositionally biased toward basic and acidic residues: residues 362–377 (VRQEDDFPGRTPDRSY), 401–412 (AKEDGCHERDDD), and 450–504 (REKM…RESK). 2 consecutive CCHHC-type zinc fingers follow at residues 496-539 (SRTE…PPEI) and 540-583 (LAMH…KLAK). Zn(2+) is bound by residues Cys505, Cys510, His523, Cys529, Cys549, Cys554, His567, and Cys573. Residues 684–708 (ASPSSSTTSSYAPSSSSNLSCGGGS) are disordered. 3 consecutive CCHHC-type zinc fingers follow at residues 895-938 (LATS…GIRI), 944-987 (DKED…QKDG), and 997-1040 (KSVK…MKKA). 12 residues coordinate Zn(2+): Cys904, Cys909, His922, Cys928, Cys953, Cys958, His971, Cys977, Cys1006, Cys1011, His1024, and Cys1030. Residues 1055 to 1131 (SNGIENDEEI…LANLSQSLIH (77 aa)) are a coiled coil.

The protein belongs to the MYT1 family. Interacts with SIN3B. Brain, testis and pituitary gland. Expression is higher in the brain than in the testis and pituitary gland. Highest level expression seen in the developing CNS.

The protein localises to the nucleus. Its subcellular location is the chromosome. Functionally, transcription factor that plays a key role in neuronal differentiation. Acts by specifically repressing expression of non-neuronal genes during neuron differentiation. In contrast to other transcription repressors that inhibit specific lineages, mediates repression of multiple differentiation programs. Also represses expression of negative regulators of neurogenesis, such as members of the Notch signaling pathway, including HES1. The combination of three transcription factors, ASCL1, POU3F2/BRN2 and MYT1L, is sufficient to reprogram fibroblasts and other somatic cells into induced neuronal (iN) cells in vitro. Directly binds the 5'-AAGTT-3' core motif present on the promoter of target genes and represses transcription by recruiting a multiprotein complex containing SIN3B. The 5'-AAGTT-3' core motif is absent from the promoter of neural genes. This chain is Myelin transcription factor 1-like protein (Myt1l), found in Rattus norvegicus (Rat).